Here is a 424-residue protein sequence, read N- to C-terminus: UPF0229 protein Ping_2705 (424 aa).

Residues 77-108 (PGNQDFIGGDRIERPPSGGAGGSGSGASDSGK) form a disordered region.

The protein belongs to the UPF0229 family.

This is UPF0229 protein Ping_2705 from Psychromonas ingrahamii (strain DSM 17664 / CCUG 51855 / 37).